The chain runs to 343 residues: Farnesyl pyrophosphate synthase (343 aa).

Residues Lys49, Arg52, and Gln87 each contribute to the isopentenyl diphosphate site. Mg(2+)-binding residues include Asp94 and Asp98. Arg103 lines the dimethylallyl diphosphate pocket. Arg104 is a binding site for isopentenyl diphosphate. Positions 191, 192, 230, 247, and 256 each coordinate dimethylallyl diphosphate.

The protein belongs to the FPP/GGPP synthase family. Mg(2+) serves as cofactor. As to expression, expressed both in apical and sub-apical cells of glandular secretory trichomes.

The protein localises to the cytoplasm. It is found in the nucleus. The enzyme catalyses isopentenyl diphosphate + dimethylallyl diphosphate = (2E)-geranyl diphosphate + diphosphate. It carries out the reaction isopentenyl diphosphate + (2E)-geranyl diphosphate = (2E,6E)-farnesyl diphosphate + diphosphate. Its pathway is isoprenoid biosynthesis; farnesyl diphosphate biosynthesis; farnesyl diphosphate from geranyl diphosphate and isopentenyl diphosphate: step 1/1. It functions in the pathway sesquiterpene biosynthesis. The protein operates within isoprenoid biosynthesis; geranyl diphosphate biosynthesis; geranyl diphosphate from dimethylallyl diphosphate and isopentenyl diphosphate: step 1/1. Involved in the biosynthesis of the antimalarial endoperoxide artemisinin. Catalyzes the sequential condensation of isopentenyl pyrophosphate with the allylic pyrophosphates, dimethylallyl pyrophosphate, and then with the resultant geranylpyrophosphate to the ultimate product farnesyl pyrophosphate. Promotes anti-malarial and antimicrobial (toward Gram-positive bacteria B.subtilis and S.aureus) activities of plant crude extract probably by triggering artemisinin levels. In Artemisia annua (Sweet wormwood), this protein is Farnesyl pyrophosphate synthase.